Here is a 324-residue protein sequence, read N- to C-terminus: Cuticle collagen sqt-1 (324 aa).

Disordered regions lie at residues 68–108 and 129–324; these read RRQY…TPNG and SGPK…YRNI. Over residues 87-97 the composition is skewed to pro residues; it reads SAPPGQPPAVP. Triple-helical region stretches follow at residues 127 to 153, 171 to 231, and 237 to 299; these read GPSG…PGVG, QGPV…KGRD, and GRPG…PGKD. Low complexity-rich tracts occupy residues 129–156 and 177–201; these read SGPK…GADD and PGAL…PGRD. Over residues 227–236 the composition is skewed to basic and acidic residues; the sequence is EKGRDAEHPI.

The protein belongs to the cuticular collagen family. In terms of assembly, collagen polypeptide chains are complexed within the cuticle by disulfide bonds and other types of covalent cross-links.

Its function is as follows. Nematode cuticles are composed largely of collagen-like proteins. The cuticle functions both as an exoskeleton and as a barrier to protect the worm from its environment. This is a collagen critical for organismal morphogenesis. Mutations in sqt-1 can lengthen, shorten, or helically twist the entire animal. The polypeptide is Cuticle collagen sqt-1 (sqt-1) (Caenorhabditis elegans).